Consider the following 101-residue polypeptide: Acylphosphatase (101 aa).

Residues 13-101 (RARILVRGVV…GEFRGFEIRY (89 aa)) enclose the Acylphosphatase-like domain. Active-site residues include Arg-28 and Asn-46.

This sequence belongs to the acylphosphatase family.

The enzyme catalyses an acyl phosphate + H2O = a carboxylate + phosphate + H(+). In Aeropyrum pernix (strain ATCC 700893 / DSM 11879 / JCM 9820 / NBRC 100138 / K1), this protein is Acylphosphatase (acyP).